The primary structure comprises 352 residues: Biotin synthase (352 aa).

The 219-residue stretch at 44–262 folds into the Radical SAM core domain; the sequence is NRVQVSTLLS…LAVARIMMPK (219 aa). Positions 59, 63, and 66 each coordinate [4Fe-4S] cluster. Cys103, Cys134, Cys194, and Arg266 together coordinate [2Fe-2S] cluster.

Belongs to the radical SAM superfamily. Biotin synthase family. Homodimer. Requires [4Fe-4S] cluster as cofactor. It depends on [2Fe-2S] cluster as a cofactor.

The enzyme catalyses (4R,5S)-dethiobiotin + (sulfur carrier)-SH + 2 reduced [2Fe-2S]-[ferredoxin] + 2 S-adenosyl-L-methionine = (sulfur carrier)-H + biotin + 2 5'-deoxyadenosine + 2 L-methionine + 2 oxidized [2Fe-2S]-[ferredoxin]. It participates in cofactor biosynthesis; biotin biosynthesis; biotin from 7,8-diaminononanoate: step 2/2. In terms of biological role, catalyzes the conversion of dethiobiotin (DTB) to biotin by the insertion of a sulfur atom into dethiobiotin via a radical-based mechanism. The sequence is that of Biotin synthase from Pseudomonas aeruginosa (strain UCBPP-PA14).